We begin with the raw amino-acid sequence, 459 residues long: Ribulose bisphosphate carboxylase large chain (459 aa).

K4 carries the N6,N6,N6-trimethyllysine modification. N113 and T163 together coordinate substrate. The active-site Proton acceptor is K165. Position 167 (K167) interacts with substrate. 3 residues coordinate Mg(2+): K191, D193, and E194. Residue K191 is modified to N6-carboxylysine. H284 (proton acceptor) is an active-site residue. Residues R285, H317, and S369 each coordinate substrate.

Belongs to the RuBisCO large chain family. Type I subfamily. As to quaternary structure, heterohexadecamer of 8 large chains and 8 small chains; disulfide-linked. The disulfide link is formed within the large subunit homodimers. It depends on Mg(2+) as a cofactor. Post-translationally, the disulfide bond which can form in the large chain dimeric partners within the hexadecamer appears to be associated with oxidative stress and protein turnover.

It is found in the plastid. The protein resides in the chloroplast. The catalysed reaction is 2 (2R)-3-phosphoglycerate + 2 H(+) = D-ribulose 1,5-bisphosphate + CO2 + H2O. It catalyses the reaction D-ribulose 1,5-bisphosphate + O2 = 2-phosphoglycolate + (2R)-3-phosphoglycerate + 2 H(+). Its function is as follows. RuBisCO catalyzes two reactions: the carboxylation of D-ribulose 1,5-bisphosphate, the primary event in carbon dioxide fixation, as well as the oxidative fragmentation of the pentose substrate in the photorespiration process. Both reactions occur simultaneously and in competition at the same active site. The sequence is that of Ribulose bisphosphate carboxylase large chain from Morus alba (White mulberry).